The primary structure comprises 249 residues: Beta-crystallin B1 (249 aa).

The disordered stretch occupies residues 1 to 49; that stretch reads MSQPAVKASATAAVNPGPDGKGKGAPPPGPAPGSGPAQAPAQPMPAAKG. Ser-2 bears the N-acetylserine mark. Positions 2-55 are N-terminal arm; it reads SQPAVKASATAAVNPGPDGKGKGAPPPGPAPGSGPAQAPAQPMPAAKGDLPPGS. Positions 34 to 49 are enriched in low complexity; it reads SGPAQAPAQPMPAAKG. 2 consecutive Beta/gamma crystallin 'Greek key' domains span residues 56-95 and 96-140; these read YKLV…IVTS and GPWV…RPIR. The segment at 141–145 is connecting peptide; that stretch reads MDAQE. Beta/gamma crystallin 'Greek key' domains lie at 146-187 and 188-230; these read HKLC…RVSS and GTWV…RRLR. The tract at residues 232–249 is C-terminal arm; sequence RQWHREGCFPVLAAEPPK.

Belongs to the beta/gamma-crystallin family. As to quaternary structure, homo/heterodimer, or complexes of higher-order. The structure of beta-crystallin oligomers seems to be stabilized through interactions between the N-terminal arms. Specific cleavages in the N-terminal arm occur during lens maturation and give rise to truncated forms, leading to impaired oligomerization and protein insolubilization.

Crystallins are the dominant structural components of the vertebrate eye lens. This is Beta-crystallin B1 (CRYBB1) from Sus scrofa (Pig).